A 145-amino-acid polypeptide reads, in one-letter code: Brain and acute leukemia cytoplasmic protein (145 aa).

Glycine 2 is lipidated: N-myristoyl glycine. Cysteine 3 carries the S-palmitoyl cysteine lipid modification. The tract at residues 3 to 35 (CGGSRADAIEPRYYESWTRETESTWLTYTDSDA) is interaction with CAMK2A. Disordered stretches follow at residues 36 to 56 (LPSA…AGVL) and 87 to 109 (CPNS…WATE). Positions 87 to 105 (CPNSQNLSSGPLTQKQNGL) are enriched in polar residues.

As to quaternary structure, interacts with CAMK2A. Post-translationally, palmitoylation and myristoylation target the protein to the lipid rafts. As to expression, at the mRNA level, predominantly expressed in the brain. At the protein level, mainly expressed in muscle tissues. In skeletal muscles, expressed in cranial and facial muscles, muscles of the neck, back, thoracic wall, and thigh. Also found in the contractile myoepithelial cell layer of salivary glands. In smooth muscles, expressed in the gastric wall, uterus, urinary bladder, as well as in the muscular lining around seminiferous tubules, prostatic ducts, epididymis, vas deferens, walls of small blood vessels in the dermis, and fascial layers between muscle fibers, brain, and around the spinal cord. Strongly expressed in myocardium. High expression levels are observed in placental spongiotrophoblast and adjacent myometrium. Also expressed in bone marrow hematopoietic cells. In the mature thymus, expressed in rare scattered cells. Weakly expressed in the brain neuropil, particularly near the hippocampus, and spinal cord white matter. Not detected in skin keratinocytes or lung (at protein level).

Its subcellular location is the cytoplasm. The protein resides in the synapse. It localises to the synaptosome. The protein localises to the membrane raft. It is found in the postsynaptic density. Its function is as follows. May play a synaptic role at the postsynaptic lipid rafts possibly through interaction with CAMK2A. In Mus musculus (Mouse), this protein is Brain and acute leukemia cytoplasmic protein (Baalc).